Consider the following 213-residue polypeptide: Non-structural protein 7b (213 aa).

An N-terminal signal peptide occupies residues 1-15 (MKFLIFVLCLSLVNG).

This is Non-structural protein 7b from Canine coronavirus (strain K378) (CCoV).